Here is an 83-residue protein sequence, read N- to C-terminus: RNA-binding protein Hfq (83 aa).

In terms of domain architecture, Sm spans aspartate 9–valine 68.

This sequence belongs to the Hfq family. Homohexamer.

In terms of biological role, RNA chaperone that binds small regulatory RNA (sRNAs) and mRNAs to facilitate mRNA translational regulation in response to envelope stress, environmental stress and changes in metabolite concentrations. Also binds with high specificity to tRNAs. This chain is RNA-binding protein Hfq, found in Marinobacter nauticus (strain ATCC 700491 / DSM 11845 / VT8) (Marinobacter aquaeolei).